Consider the following 348-residue polypeptide: Spore development regulator vosA (348 aa).

Residues 46-244 (ALSPSSCFLS…SDQGVRLRLR (199 aa)) form the Velvet domain. The segment at 250–294 (MMSNKRSISGSGDLTSDQSQQQQQQQPLAKKRREDSVESANPSSL) is disordered. Positions 253 to 266 (NKRSISGSGDLTSD) are enriched in polar residues. A Nuclear localization signal motif is present at residues 274–280 (QQPLAKK).

The protein belongs to the velvet family. VosA subfamily. As to quaternary structure, forms a heterodimeric complex with VEL2; the formation of the VEL2-VOS1 complex is light-dependent.

The protein localises to the nucleus. Its function is as follows. Component of the velB-VosA heterodimeric complex that plays a dual role in activating genes associated with spore maturation and repressing certain development-associated genes. The complex binds DNA through the DNA-binding domain of vosA that recognizes an 11-nucleotide consensus sequence 5'-CTGGCCGCGGC-3' consisting of two motifs in the promoters of key developmental regulatory genes. Regulates spore viability, trehalose accumulation, and tolerance to thermal and oxidative as well as ion stresses. Positively regulates conidial pigmentation and pathogenicity on barley. The sequence is that of Spore development regulator vosA from Cochliobolus sativus (strain ND90Pr / ATCC 201652) (Common root rot and spot blotch fungus).